Reading from the N-terminus, the 401-residue chain is Lsg locus putative protein 1 (401 aa).

11 helical membrane-spanning segments follow: residues 8-28 (VIYL…LPYL), 36-56 (GYGS…VVSL), 87-107 (IIGS…LFYA), 132-152 (SYAF…VALL), 162-182 (KRIL…YFLY), 199-219 (ALFY…SFFL), 237-257 (LGLY…IQAL), 282-302 (WALF…IIPE), 320-340 (FILF…VNYL), 352-372 (CSVL…FTEI), and 374-394 (YIPY…YFMT).

Belongs to the polysaccharide synthase family. HI_0867/HI_1700 subfamily.

The protein localises to the cell membrane. In Haemophilus influenzae (strain ATCC 51907 / DSM 11121 / KW20 / Rd), this protein is Lsg locus putative protein 1.